Here is a 239-residue protein sequence, read N- to C-terminus: Probable transcriptional regulatory protein Bcer98_0465 (239 aa).

Belongs to the TACO1 family. YeeN subfamily.

The protein resides in the cytoplasm. The polypeptide is Probable transcriptional regulatory protein Bcer98_0465 (Bacillus cytotoxicus (strain DSM 22905 / CIP 110041 / 391-98 / NVH 391-98)).